A 184-amino-acid polypeptide reads, in one-letter code: ATP synthase subunit b, chloroplastic (184 aa).

A helical transmembrane segment spans residues 27-49 (LATNPINLSVVFGVLIFFGKGVL).

The protein belongs to the ATPase B chain family. F-type ATPases have 2 components, F(1) - the catalytic core - and F(0) - the membrane proton channel. F(1) has five subunits: alpha(3), beta(3), gamma(1), delta(1), epsilon(1). F(0) has four main subunits: a(1), b(1), b'(1) and c(10-14). The alpha and beta chains form an alternating ring which encloses part of the gamma chain. F(1) is attached to F(0) by a central stalk formed by the gamma and epsilon chains, while a peripheral stalk is formed by the delta, b and b' chains.

It is found in the plastid. It localises to the chloroplast thylakoid membrane. Its function is as follows. F(1)F(0) ATP synthase produces ATP from ADP in the presence of a proton or sodium gradient. F-type ATPases consist of two structural domains, F(1) containing the extramembraneous catalytic core and F(0) containing the membrane proton channel, linked together by a central stalk and a peripheral stalk. During catalysis, ATP synthesis in the catalytic domain of F(1) is coupled via a rotary mechanism of the central stalk subunits to proton translocation. Component of the F(0) channel, it forms part of the peripheral stalk, linking F(1) to F(0). The chain is ATP synthase subunit b, chloroplastic from Draba nemorosa (Woodland whitlowgrass).